A 200-amino-acid chain; its full sequence is Small ribosomal subunit protein mS26 (200 aa).

The N-terminal 27 residues, 1 to 27, are a transit peptide targeting the mitochondrion; sequence MLRALNRLAARPGGQPPTLLLLPVRGR. Lysine 159 carries the N6-acetyllysine modification.

Belongs to the mitochondrion-specific ribosomal protein mS26 family. Component of the mitochondrial ribosome small subunit (28S) which comprises a 12S rRNA and about 30 distinct proteins.

The protein resides in the mitochondrion. The chain is Small ribosomal subunit protein mS26 (Mrps26) from Rattus norvegicus (Rat).